We begin with the raw amino-acid sequence, 524 residues long: Zinc finger protein 346 (524 aa).

Matrin-type zinc fingers lie at residues 34–64, 92–126, 162–192, 226–260, 286–316, 343–373, and 400–430; these read TQCKVCSAVLISESQKLAHYQSRKHANKVRR, DRSKCCPVCNMTFSSPVVAESHYIGKTHIKNLRLR, KFCKLCHSTFNNPLMAEQHYAGKKHKKQETK, GKGFSCDKCNIVLNSIEQYQAHVSGAKHKNQLMSM, FSCDTCNIVLNSIEQYQAHISGAKHKNHLKS, FSCDTCNIVLNSIEQYQAHISGAKHKNHLMS, and FSCDTCNIVLNSIEQYQAHVSGAKHKNQLMS. 8 residues coordinate Zn(2+): cysteine 36, cysteine 39, histidine 52, histidine 58, cysteine 97, cysteine 100, histidine 113, and histidine 119. Disordered regions lie at residues 453–486 and 494–513; these read SAGGALSSGGPSGRGFCPSGDLTPKGPSSFGSLP and PLYPPAHSSQPYVHDDTMSP. The segment covering 476-486 has biased composition (low complexity); sequence PKGPSSFGSLP.

It is found in the nucleus. It localises to the cytoplasm. Functionally, binds preferentially to dsRNA, but also to RNA-DNA hybrids. The chain is Zinc finger protein 346 from Xenopus laevis (African clawed frog).